The chain runs to 549 residues: Glucose-6-phosphate isomerase (549 aa).

Glu355 serves as the catalytic Proton donor. Catalysis depends on residues His386 and Lys514.

It belongs to the GPI family.

It localises to the cytoplasm. The catalysed reaction is alpha-D-glucose 6-phosphate = beta-D-fructose 6-phosphate. It functions in the pathway carbohydrate biosynthesis; gluconeogenesis. It participates in carbohydrate degradation; glycolysis; D-glyceraldehyde 3-phosphate and glycerone phosphate from D-glucose: step 2/4. Its function is as follows. Catalyzes the reversible isomerization of glucose-6-phosphate to fructose-6-phosphate. In Cronobacter sakazakii (strain ATCC BAA-894) (Enterobacter sakazakii), this protein is Glucose-6-phosphate isomerase.